The sequence spans 342 residues: Protein-glutamate methylesterase/protein-glutamine glutaminase 1 (342 aa).

Residues 3–121 (RVLVIDDSLF…NIREIGGELK (119 aa)) enclose the Response regulatory domain. The residue at position 54 (Asp-54) is a 4-aspartylphosphate. The CheB-type methylesterase domain maps to 141-340 (DSNARNVVLI…EKIVETIRAM (200 aa)). Residues Ser-153, His-180, and Asp-282 contribute to the active site.

Belongs to the CheB family. In terms of processing, phosphorylated by CheA. Phosphorylation of the N-terminal regulatory domain activates the methylesterase activity.

It localises to the cytoplasm. It catalyses the reaction [protein]-L-glutamate 5-O-methyl ester + H2O = L-glutamyl-[protein] + methanol + H(+). The enzyme catalyses L-glutaminyl-[protein] + H2O = L-glutamyl-[protein] + NH4(+). In terms of biological role, involved in chemotaxis. Part of a chemotaxis signal transduction system that modulates chemotaxis in response to various stimuli. Catalyzes the demethylation of specific methylglutamate residues introduced into the chemoreceptors (methyl-accepting chemotaxis proteins or MCP) by CheR. Also mediates the irreversible deamidation of specific glutamine residues to glutamic acid. This Methanospirillum hungatei JF-1 (strain ATCC 27890 / DSM 864 / NBRC 100397 / JF-1) protein is Protein-glutamate methylesterase/protein-glutamine glutaminase 1.